The following is a 108-amino-acid chain: Nucleoid-associated protein BMASAVP1_A1850 (108 aa).

The disordered stretch occupies residues 84-108; sequence EATSQEKMSGMTSGLPLPPGFKLPF. Residues 85 to 95 show a composition bias toward polar residues; sequence ATSQEKMSGMT. A compositionally biased stretch (pro residues) spans 99 to 108; sequence PLPPGFKLPF.

It belongs to the YbaB/EbfC family. As to quaternary structure, homodimer.

The protein resides in the cytoplasm. Its subcellular location is the nucleoid. In terms of biological role, binds to DNA and alters its conformation. May be involved in regulation of gene expression, nucleoid organization and DNA protection. This is Nucleoid-associated protein BMASAVP1_A1850 from Burkholderia mallei (strain SAVP1).